The sequence spans 92 residues: Exodeoxyribonuclease 7 small subunit (92 aa).

Residues 71–84 (AESAGTAKSAVAAD) are compositionally biased toward low complexity. Residues 71-92 (AESAGTAKSAVAADSRGAADSA) are disordered.

It belongs to the XseB family. Heterooligomer composed of large and small subunits.

The protein resides in the cytoplasm. The catalysed reaction is Exonucleolytic cleavage in either 5'- to 3'- or 3'- to 5'-direction to yield nucleoside 5'-phosphates.. Its function is as follows. Bidirectionally degrades single-stranded DNA into large acid-insoluble oligonucleotides, which are then degraded further into small acid-soluble oligonucleotides. This is Exodeoxyribonuclease 7 small subunit from Leifsonia xyli subsp. xyli (strain CTCB07).